A 161-amino-acid polypeptide reads, in one-letter code: MTKKKTNTKAGSNTIALNKKARHEYFIEDEFEAGMELQGWEVKSLRQGKANIAESYVYIKDGEAFISGMTIIPLQQASTHVVANPTRIRKLLLSRRELDNLFGRINREGMTLTALSLYWSRSWVKIKIGVAKGKKLHDKREDLKEKEWQRQKDRVMKSALR.

Belongs to the SmpB family.

The protein resides in the cytoplasm. Required for rescue of stalled ribosomes mediated by trans-translation. Binds to transfer-messenger RNA (tmRNA), required for stable association of tmRNA with ribosomes. tmRNA and SmpB together mimic tRNA shape, replacing the anticodon stem-loop with SmpB. tmRNA is encoded by the ssrA gene; the 2 termini fold to resemble tRNA(Ala) and it encodes a 'tag peptide', a short internal open reading frame. During trans-translation Ala-aminoacylated tmRNA acts like a tRNA, entering the A-site of stalled ribosomes, displacing the stalled mRNA. The ribosome then switches to translate the ORF on the tmRNA; the nascent peptide is terminated with the 'tag peptide' encoded by the tmRNA and targeted for degradation. The ribosome is freed to recommence translation, which seems to be the essential function of trans-translation. The polypeptide is SsrA-binding protein (Vibrio cholerae serotype O1 (strain ATCC 39541 / Classical Ogawa 395 / O395)).